Reading from the N-terminus, the 357-residue chain is 3-isopropylmalate dehydrogenase (357 aa).

Residues R97, R107, R135, and D224 each contribute to the substrate site. D224, D248, and D252 together coordinate Mg(2+). 282–294 is an NAD(+) binding site; the sequence is GSAPDIAGQDKAN.

The protein belongs to the isocitrate and isopropylmalate dehydrogenases family. LeuB type 1 subfamily. Homodimer. It depends on Mg(2+) as a cofactor. Requires Mn(2+) as cofactor.

The protein localises to the cytoplasm. The enzyme catalyses (2R,3S)-3-isopropylmalate + NAD(+) = 4-methyl-2-oxopentanoate + CO2 + NADH. The protein operates within amino-acid biosynthesis; L-leucine biosynthesis; L-leucine from 3-methyl-2-oxobutanoate: step 3/4. Its function is as follows. Catalyzes the oxidation of 3-carboxy-2-hydroxy-4-methylpentanoate (3-isopropylmalate) to 3-carboxy-4-methyl-2-oxopentanoate. The product decarboxylates to 4-methyl-2 oxopentanoate. This is 3-isopropylmalate dehydrogenase from Synechococcus sp. (strain CC9605).